We begin with the raw amino-acid sequence, 1157 residues long: DNA-directed RNA polymerase subunit beta (1157 aa).

This sequence belongs to the RNA polymerase beta chain family. As to quaternary structure, the RNAP catalytic core consists of 2 alpha, 1 beta, 1 beta' and 1 omega subunit. When a sigma factor is associated with the core the holoenzyme is formed, which can initiate transcription.

The enzyme catalyses RNA(n) + a ribonucleoside 5'-triphosphate = RNA(n+1) + diphosphate. Its function is as follows. DNA-dependent RNA polymerase catalyzes the transcription of DNA into RNA using the four ribonucleoside triphosphates as substrates. This chain is DNA-directed RNA polymerase subunit beta, found in Tropheryma whipplei (strain TW08/27) (Whipple's bacillus).